A 201-amino-acid chain; its full sequence is MKLIIASNNAHKITEIEALLASISIDLPVVSLQEIGDVPEIVEDGTTFEENAVKKVETIAKVAPNDYILADDSGMSVDALNGEPGVYSARYAGDHDDQANIDKVLQKLAKVPNEQRTAHFNSVIALHSPKGSNLIVNGQVDGYITESERGQDGFGYDPIFFVPSMNKTFAEMSASEKNTISHRGLALQELGKKLPVWLKGE.

7–12 (SNNAHK) contacts substrate. Residue Asp72 is the Proton acceptor of the active site. Mg(2+) is bound at residue Asp72. Residues Ser73, 154-157 (FGYD), Lys177, and 182-183 (HR) each bind substrate.

The protein belongs to the HAM1 NTPase family. As to quaternary structure, homodimer. Mg(2+) is required as a cofactor.

The enzyme catalyses XTP + H2O = XMP + diphosphate + H(+). The catalysed reaction is dITP + H2O = dIMP + diphosphate + H(+). It carries out the reaction ITP + H2O = IMP + diphosphate + H(+). Pyrophosphatase that catalyzes the hydrolysis of nucleoside triphosphates to their monophosphate derivatives, with a high preference for the non-canonical purine nucleotides XTP (xanthosine triphosphate), dITP (deoxyinosine triphosphate) and ITP. Seems to function as a house-cleaning enzyme that removes non-canonical purine nucleotides from the nucleotide pool, thus preventing their incorporation into DNA/RNA and avoiding chromosomal lesions. The protein is dITP/XTP pyrophosphatase of Leuconostoc mesenteroides subsp. mesenteroides (strain ATCC 8293 / DSM 20343 / BCRC 11652 / CCM 1803 / JCM 6124 / NCDO 523 / NBRC 100496 / NCIMB 8023 / NCTC 12954 / NRRL B-1118 / 37Y).